The following is a 259-amino-acid chain: Deoxyribose-phosphate aldolase (259 aa).

Asp102 acts as the Proton donor/acceptor in catalysis. The active-site Schiff-base intermediate with acetaldehyde is Lys167. Lys201 (proton donor/acceptor) is an active-site residue.

Belongs to the DeoC/FbaB aldolase family. DeoC type 2 subfamily.

The protein localises to the cytoplasm. It catalyses the reaction 2-deoxy-D-ribose 5-phosphate = D-glyceraldehyde 3-phosphate + acetaldehyde. Its pathway is carbohydrate degradation; 2-deoxy-D-ribose 1-phosphate degradation; D-glyceraldehyde 3-phosphate and acetaldehyde from 2-deoxy-alpha-D-ribose 1-phosphate: step 2/2. Its function is as follows. Catalyzes a reversible aldol reaction between acetaldehyde and D-glyceraldehyde 3-phosphate to generate 2-deoxy-D-ribose 5-phosphate. This chain is Deoxyribose-phosphate aldolase, found in Escherichia coli O45:K1 (strain S88 / ExPEC).